We begin with the raw amino-acid sequence, 404 residues long: Argininosuccinate synthase (404 aa).

Residues 11 to 19 (AYSGGLDTS) and A40 contribute to the ATP site. Positions 92 and 97 each coordinate L-citrulline. G122 contacts ATP. Residues T124, N128, and D129 each contribute to the L-aspartate site. N128 lines the L-citrulline pocket. R132, S181, S190, E266, and Y278 together coordinate L-citrulline.

Belongs to the argininosuccinate synthase family. Type 1 subfamily. As to quaternary structure, homotetramer.

It localises to the cytoplasm. It carries out the reaction L-citrulline + L-aspartate + ATP = 2-(N(omega)-L-arginino)succinate + AMP + diphosphate + H(+). The protein operates within amino-acid biosynthesis; L-arginine biosynthesis; L-arginine from L-ornithine and carbamoyl phosphate: step 2/3. This Moritella abyssi protein is Argininosuccinate synthase.